The chain runs to 488 residues: 3-octaprenyl-4-hydroxybenzoate carboxy-lyase (488 aa).

Asn172 serves as a coordination point for Mn(2+). Residues Ile175–Arg177, Arg189–Leu191, and Arg194–Gly195 each bind prenylated FMN. Glu238 provides a ligand contact to Mn(2+). Asp287 functions as the Proton donor in the catalytic mechanism.

It belongs to the UbiD family. In terms of assembly, homohexamer. Prenylated FMN is required as a cofactor. The cofactor is Mn(2+).

It localises to the cell membrane. It carries out the reaction a 4-hydroxy-3-(all-trans-polyprenyl)benzoate + H(+) = a 2-(all-trans-polyprenyl)phenol + CO2. It participates in cofactor biosynthesis; ubiquinone biosynthesis. Functionally, catalyzes the decarboxylation of 3-octaprenyl-4-hydroxy benzoate to 2-octaprenylphenol, an intermediate step in ubiquinone biosynthesis. In Alteromonas mediterranea (strain DSM 17117 / CIP 110805 / LMG 28347 / Deep ecotype), this protein is 3-octaprenyl-4-hydroxybenzoate carboxy-lyase.